The sequence spans 265 residues: Keratinocyte-associated transmembrane protein 2 (265 aa).

A signal peptide spans 1–49; the sequence is MAAAALKRMRGPAQAKLLPGSAIQALVGLARPLVLALLLVSAALSSVVS. At 50-196 the chain is on the extracellular side; the sequence is RTDSPSPTVL…MPSSNIEEED (147 aa). The segment covering 72-96 has biased composition (polar residues); the sequence is THENQTKPSISQISTTLPPTMSTEK. 2 disordered regions span residues 72 to 123 and 135 to 168; these read THEN…EDPS and SPST…SDDT. N-linked (GlcNAc...) asparagine glycosylation is present at Asn75. Acidic residues predominate over residues 114–123; it reads EEADNNEDPS. A helical membrane pass occupies residues 197 to 217; it reads SHFFFHLIIFAFCIAVVYITY. Over 218-265 the chain is Cytoplasmic; the sequence is HNKRKIFLLVQSRKWRDGLCSKTVEYHRLDQNVNEAMPSLKITNDYTF. 2 positions are modified to phosphoserine: Ser229 and Ser256.

The protein resides in the membrane. The sequence is that of Keratinocyte-associated transmembrane protein 2 (KCT2) from Pongo abelii (Sumatran orangutan).